The following is a 354-amino-acid chain: Uroporphyrinogen decarboxylase (354 aa).

Residues 27-31 (RQAGR), D77, Y154, S209, and H327 contribute to the substrate site.

Belongs to the uroporphyrinogen decarboxylase family. Homodimer.

It is found in the cytoplasm. The enzyme catalyses uroporphyrinogen III + 4 H(+) = coproporphyrinogen III + 4 CO2. Its pathway is porphyrin-containing compound metabolism; protoporphyrin-IX biosynthesis; coproporphyrinogen-III from 5-aminolevulinate: step 4/4. Its function is as follows. Catalyzes the decarboxylation of four acetate groups of uroporphyrinogen-III to yield coproporphyrinogen-III. In Shewanella amazonensis (strain ATCC BAA-1098 / SB2B), this protein is Uroporphyrinogen decarboxylase.